Consider the following 368-residue polypeptide: L-cysteine desulfhydrase Cds1 (368 aa).

At Lys-67 the chain carries N6-(pyridoxal phosphate)lysine. Residues 203–207 (GTGGT) and Ser-299 contribute to the pyridoxal 5'-phosphate site.

The protein belongs to the cysteine synthase/cystathionine beta-synthase family. Cds1 subfamily. Pyridoxal 5'-phosphate is required as a cofactor.

Its subcellular location is the cytoplasm. The catalysed reaction is L-cysteine + H2O = hydrogen sulfide + pyruvate + NH4(+) + H(+). In terms of biological role, a cysteine desulfhydrase that generates hydrogen sulfide, H(2)S. The H(2)S produced by this enzyme stimulates respiration in M.tuberculosis, mediated primarily via cytochrome bd with a lesser contribution from cytochrome bc1/aa3. H(2)S modulates the balance between respiration and glycolysis, and also contributes to redox homeostasis. Probably eliminates toxic levels of Cys (which can induce oxidative stress). This is L-cysteine desulfhydrase Cds1 from Mycobacterium tuberculosis (strain ATCC 25177 / H37Ra).